We begin with the raw amino-acid sequence, 368 residues long: UDP-N-acetylglucosamine--N-acetylmuramyl-(pentapeptide) pyrophosphoryl-undecaprenol N-acetylglucosamine transferase (368 aa).

UDP-N-acetyl-alpha-D-glucosamine is bound by residues 10-12 (TGG), Asn-126, Ser-200, Ile-255, and Gln-300.

The protein belongs to the glycosyltransferase 28 family. MurG subfamily.

Its subcellular location is the cell membrane. It carries out the reaction Mur2Ac(oyl-L-Ala-gamma-D-Glu-L-Lys-D-Ala-D-Ala)-di-trans,octa-cis-undecaprenyl diphosphate + UDP-N-acetyl-alpha-D-glucosamine = beta-D-GlcNAc-(1-&gt;4)-Mur2Ac(oyl-L-Ala-gamma-D-Glu-L-Lys-D-Ala-D-Ala)-di-trans,octa-cis-undecaprenyl diphosphate + UDP + H(+). Its pathway is cell wall biogenesis; peptidoglycan biosynthesis. Cell wall formation. Catalyzes the transfer of a GlcNAc subunit on undecaprenyl-pyrophosphoryl-MurNAc-pentapeptide (lipid intermediate I) to form undecaprenyl-pyrophosphoryl-MurNAc-(pentapeptide)GlcNAc (lipid intermediate II). In Lactobacillus acidophilus (strain ATCC 700396 / NCK56 / N2 / NCFM), this protein is UDP-N-acetylglucosamine--N-acetylmuramyl-(pentapeptide) pyrophosphoryl-undecaprenol N-acetylglucosamine transferase.